Here is a 240-residue protein sequence, read N- to C-terminus: UDP-2,3-diacylglucosamine hydrolase (240 aa).

Mn(2+) is bound by residues D8, H10, D41, N79, and H114. A substrate-binding site is contributed by 79–80 (NR). 5 residues coordinate substrate: D122, S160, N164, K167, and H195. Mn(2+) is bound by residues H195 and H197.

It belongs to the LpxH family. Requires Mn(2+) as cofactor.

It is found in the cell inner membrane. It localises to the cytoplasm. The catalysed reaction is UDP-2-N,3-O-bis[(3R)-3-hydroxytetradecanoyl]-alpha-D-glucosamine + H2O = 2-N,3-O-bis[(3R)-3-hydroxytetradecanoyl]-alpha-D-glucosaminyl 1-phosphate + UMP + 2 H(+). It participates in glycolipid biosynthesis; lipid IV(A) biosynthesis; lipid IV(A) from (3R)-3-hydroxytetradecanoyl-[acyl-carrier-protein] and UDP-N-acetyl-alpha-D-glucosamine: step 4/6. With respect to regulation, inhibited by a sulfonyl piperazine compound that shows antibacterial activity against E.coli; LpxH is the cellular target of this compound. Inhibited by 0.01% (or more) Triton X-100 in vitro. In terms of biological role, hydrolyzes the pyrophosphate bond of UDP-2,3-diacylglucosamine to yield 2,3-diacylglucosamine 1-phosphate (lipid X) and UMP by catalyzing the attack of water at the alpha-P atom. Involved in the biosynthesis of lipid A, a phosphorylated glycolipid that anchors the lipopolysaccharide to the outer membrane of the cell. Is essential for E.coli growth. Does not cleave the unacylated UDP-GlcNAc, the mono-acylated UDP-3-O-(R)-3-hydroxymyristoyl-GlcNAc, and CDP-diacylglycerol. The sequence is that of UDP-2,3-diacylglucosamine hydrolase from Escherichia coli (strain K12).